The primary structure comprises 430 residues: Hemagglutinin-esterase (430 aa).

An N-terminal signal peptide occupies residues 1 to 27 (MLRMRVRPPSAIPVFLIFVLLPFVLTS). Residues 16–133 (LIFVLLPFVL…GSFGWVSNKV (118 aa)) form an esterase domain first part region. The Virion surface portion of the chain corresponds to 28–404 (KPITPHYGPG…ENVDVTSSAY (377 aa)). The Nucleophile role is filled by serine 49. A disulfide bridge links cysteine 53 with cysteine 69. N-linked (GlcNAc...) asparagine; by host glycans are attached at residues asparagine 88, asparagine 117, asparagine 159, asparagine 165, asparagine 247, asparagine 268, and asparagine 289. Disulfide bonds link cysteine 120-cysteine 168, cysteine 207-cysteine 284, and cysteine 215-cysteine 257. The tract at residues 134 to 274 (GFYSKLYSMA…GVYNATTFGK (141 aa)) is receptor binding. Residues 275–390 (FLIYPTKSYC…SCPQYYKLFE (116 aa)) are esterase domain second part. A disulfide bridge connects residues cysteine 315 and cysteine 320. A glycan (N-linked (GlcNAc...) asparagine; by host) is linked at asparagine 324. Catalysis depends on charge relay system residues aspartate 336 and histidine 339. Residue asparagine 354 is glycosylated (N-linked (GlcNAc...) asparagine; by host). A disulfide bond links cysteine 357 and cysteine 382. The chain crosses the membrane as a helical span at residues 405–425 (FVATWVLLVLVIILIFILISF). Over 426–430 (CLSSY) the chain is Intravirion.

Belongs to the influenza type C/coronaviruses hemagglutinin-esterase family. N-glycosylated.

It localises to the virion membrane. The protein localises to the host cell membrane. It carries out the reaction N-acetyl-9-O-acetylneuraminate + H2O = N-acetylneuraminate + acetate + H(+). It catalyses the reaction N-acetyl-4-O-acetylneuraminate + H2O = N-acetylneuraminate + acetate + H(+). Functionally, structural protein that makes short spikes at the surface of the virus. Contains receptor binding and receptor-destroying activities. Mediates de-O-acetylation of N-acetyl-9-O-acetylneuraminic acid, which is probably the receptor determinant recognized by the virus on the surface of erythrocytes and susceptible cells. This receptor-destroying activity is important for virus release as it probably helps preventing self-aggregation and ensures the efficient spread of the progeny virus from cell to cell. May serve as a secondary viral attachment protein for initiating infection, the spike protein being the major one. Seems to be a 'luxury' protein that is not absolutely necessary for virus infection in culture. However, its presence in the virus may alter its pathogenicity. May become a target for both the humoral and the cellular branches of the immune system. This Porcine torovirus (strain P10) (PoTV) protein is Hemagglutinin-esterase (HE).